The sequence spans 355 residues: Peptide chain release factor 1 (355 aa).

Glutamine 233 bears the N5-methylglutamine mark. Over residues 280–293 (KRRQKEQERSDSRR) the composition is skewed to basic and acidic residues. The segment at 280-310 (KRRQKEQERSDSRRGQVGSGDRSERIRTYNF) is disordered.

This sequence belongs to the prokaryotic/mitochondrial release factor family. In terms of processing, methylated by PrmC. Methylation increases the termination efficiency of RF1.

The protein localises to the cytoplasm. Its function is as follows. Peptide chain release factor 1 directs the termination of translation in response to the peptide chain termination codons UAG and UAA. The chain is Peptide chain release factor 1 (prfA) from Rickettsia prowazekii (strain Madrid E).